The primary structure comprises 246 residues: tRNA pseudouridine synthase A (246 aa).

D52 serves as the catalytic Nucleophile. Y111 contributes to the substrate binding site.

It belongs to the tRNA pseudouridine synthase TruA family. Homodimer.

The catalysed reaction is uridine(38/39/40) in tRNA = pseudouridine(38/39/40) in tRNA. In terms of biological role, formation of pseudouridine at positions 38, 39 and 40 in the anticodon stem and loop of transfer RNAs. This chain is tRNA pseudouridine synthase A, found in Borreliella burgdorferi (strain ZS7) (Borrelia burgdorferi).